The chain runs to 621 residues: Growth factor receptor-bound protein 10 (621 aa).

Composition is skewed to polar residues over residues 1–23 and 33–59; these read MNNDINSSVESLNSACNMQSDTD and HASNQGAASSSRGQPQASPRQKMQRSQ. Positions 1-118 are disordered; that stretch reads MNNDINSSVE…PSQPPAKHCG (118 aa). Phosphoserine occurs at positions 50 and 96. The span at 95-112 shows a compositional bias: pro residues; the sequence is GSPPSVAPSSLPPPPSQP. A Ras-associating domain is found at 194 to 278; it reads LRKDVKVFSE…SKFLFRKNYA (85 aa). One can recognise a PH domain in the interval 318 to 427; it reads CPEIQGFLQV…WMTAFRLLKY (110 aa). Ser-455 is subject to Phosphoserine; by MTOR and PKB/AKT1. Phosphoserine occurs at positions 458 and 503. Positions 520-601 constitute an SH2 domain; that stretch reads WFHGRISREE…SDLIQLVDFY (82 aa).

It belongs to the GRB7/10/14 family. As to quaternary structure, interacts with ligand-activated tyrosine kinase receptors, including FGFR1, INSR, IGF1R, MET and PDGFRB in a phosphotyrosine-dependent manner through the SH2 domain. Poorly binds to the EGFR. Directly interacts with MAP3K14/NIK and is recruited to the EGFR-ERBB2 complex. Interacts with GIGYF1/PERQ1 and GIGYF2/TNRC15. When unphosphorylated, interacts with AKT1 and when phosphorylated with YWHAE/14-3-3 epsilon. Interacts with NEDD4. Interacts with LRP6, thus interfering with the binding of AXIN1 to LRP6. Binds to activated NRAS. In terms of processing, phosphorylated on serine residues upon EGF, FGF and PDGF stimulation. In terms of tissue distribution, widely expressed.

It is found in the cytoplasm. With respect to regulation, phosphorylation by mTORC1 stabilizes and activates GRB10 constituting a feedback pathway by which mTORC1 inhibits INSR-dependent signaling. Its function is as follows. Adapter protein which modulates coupling of a number of cell surface receptor kinases with specific signaling pathways. Binds to, and suppress signals from, activated receptors tyrosine kinases, including the insulin (INSR) and insulin-like growth factor (IGF1R) receptors. The inhibitory effect can be achieved by 2 mechanisms: interference with the signaling pathway and increased receptor degradation. Delays and reduces AKT1 phosphorylation in response to insulin stimulation. Blocks association between INSR and IRS1 and IRS2 and prevents insulin-stimulated IRS1 and IRS2 tyrosine phosphorylation. Recruits NEDD4 to IGF1R, leading to IGF1R ubiquitination, increased internalization and degradation by both the proteasomal and lysosomal pathways. A similar role in the mediation of ubiquitination also has been suggested with INSR. Negatively regulates Wnt signaling by interacting with LRP6 intracellular portion and interfering with the binding of AXIN1 to LRP6. Positive regulator of the KDR/VEGFR-2 signaling pathway. May inhibit NEDD4-mediated degradation of KDR/VEGFR-2. This chain is Growth factor receptor-bound protein 10 (Grb10), found in Mus musculus (Mouse).